A 96-amino-acid polypeptide reads, in one-letter code: Pyrimidine/purine nucleoside phosphorylase (96 aa).

This sequence belongs to the nucleoside phosphorylase PpnP family.

The enzyme catalyses a purine D-ribonucleoside + phosphate = a purine nucleobase + alpha-D-ribose 1-phosphate. It catalyses the reaction adenosine + phosphate = alpha-D-ribose 1-phosphate + adenine. The catalysed reaction is cytidine + phosphate = cytosine + alpha-D-ribose 1-phosphate. It carries out the reaction guanosine + phosphate = alpha-D-ribose 1-phosphate + guanine. The enzyme catalyses inosine + phosphate = alpha-D-ribose 1-phosphate + hypoxanthine. It catalyses the reaction thymidine + phosphate = 2-deoxy-alpha-D-ribose 1-phosphate + thymine. The catalysed reaction is uridine + phosphate = alpha-D-ribose 1-phosphate + uracil. It carries out the reaction xanthosine + phosphate = alpha-D-ribose 1-phosphate + xanthine. Its function is as follows. Catalyzes the phosphorolysis of diverse nucleosides, yielding D-ribose 1-phosphate and the respective free bases. Can use uridine, adenosine, guanosine, cytidine, thymidine, inosine and xanthosine as substrates. Also catalyzes the reverse reactions. The chain is Pyrimidine/purine nucleoside phosphorylase from Serratia proteamaculans (strain 568).